The primary structure comprises 380 residues: mRNA cap guanine-N(7) methyltransferase (380 aa).

One can recognise an mRNA cap 0 methyltransferase domain in the interval 24 to 333 (SRIFFMRNMN…MYLVFGFRKK (310 aa)). Position 33–34 (33–34 (NN)) interacts with mRNA. S-adenosyl-L-methionine contacts are provided by Lys-37, Ala-62, Asp-84, Asp-117, Gln-139, and Tyr-144. Residues 336–380 (EAEKTEEEPATTKPVAESESEQKEVTESEEKEDQEDCEHQEAQTN) are disordered.

Belongs to the class I-like SAM-binding methyltransferase superfamily. mRNA cap 0 methyltransferase family.

The protein resides in the nucleus. The enzyme catalyses a 5'-end (5'-triphosphoguanosine)-ribonucleoside in mRNA + S-adenosyl-L-methionine = a 5'-end (N(7)-methyl 5'-triphosphoguanosine)-ribonucleoside in mRNA + S-adenosyl-L-homocysteine. Functionally, mRNA-capping methyltransferase that methylates the N7 position of the added guanosine to the 5'-cap structure of mRNAs. Binds RNA containing 5'-terminal GpppC. This is mRNA cap guanine-N(7) methyltransferase (tag-72) from Caenorhabditis elegans.